Reading from the N-terminus, the 414-residue chain is UDP-N-acetylglucosamine 1-carboxyvinyltransferase (414 aa).

Residue 19 to 20 (KN) participates in phosphoenolpyruvate binding. Arg89 is a binding site for UDP-N-acetyl-alpha-D-glucosamine. The active-site Proton donor is Cys113. Residue Cys113 is modified to 2-(S-cysteinyl)pyruvic acid O-phosphothioketal. Residues 118–122 (RPIDL), Asp301, and Val323 contribute to the UDP-N-acetyl-alpha-D-glucosamine site.

This sequence belongs to the EPSP synthase family. MurA subfamily.

The protein localises to the cytoplasm. The catalysed reaction is phosphoenolpyruvate + UDP-N-acetyl-alpha-D-glucosamine = UDP-N-acetyl-3-O-(1-carboxyvinyl)-alpha-D-glucosamine + phosphate. It functions in the pathway cell wall biogenesis; peptidoglycan biosynthesis. Its function is as follows. Cell wall formation. Adds enolpyruvyl to UDP-N-acetylglucosamine. The polypeptide is UDP-N-acetylglucosamine 1-carboxyvinyltransferase (Bdellovibrio bacteriovorus (strain ATCC 15356 / DSM 50701 / NCIMB 9529 / HD100)).